Consider the following 155-residue polypeptide: UBA-like domain-containing protein 1 (155 aa).

The interval 81-155 (KASESFNSSS…KASAAMEAER (75 aa)) is disordered. The span at 83 to 96 (SESFNSSSSPSMAT) shows a compositional bias: low complexity. Residues 112 to 127 (ANQQSLWTQGPSAQQT) are compositionally biased toward polar residues. The segment covering 139-155 (QQAASEQKASAAMEAER) has biased composition (low complexity).

This sequence belongs to the UBALD family.

The polypeptide is UBA-like domain-containing protein 1 (ubald1) (Danio rerio (Zebrafish)).